The primary structure comprises 257 residues: Imidazole glycerol phosphate synthase subunit HisF (257 aa).

Catalysis depends on residues D11 and D130.

It belongs to the HisA/HisF family. In terms of assembly, heterodimer of HisH and HisF.

Its subcellular location is the cytoplasm. The enzyme catalyses 5-[(5-phospho-1-deoxy-D-ribulos-1-ylimino)methylamino]-1-(5-phospho-beta-D-ribosyl)imidazole-4-carboxamide + L-glutamine = D-erythro-1-(imidazol-4-yl)glycerol 3-phosphate + 5-amino-1-(5-phospho-beta-D-ribosyl)imidazole-4-carboxamide + L-glutamate + H(+). Its pathway is amino-acid biosynthesis; L-histidine biosynthesis; L-histidine from 5-phospho-alpha-D-ribose 1-diphosphate: step 5/9. Its function is as follows. IGPS catalyzes the conversion of PRFAR and glutamine to IGP, AICAR and glutamate. The HisF subunit catalyzes the cyclization activity that produces IGP and AICAR from PRFAR using the ammonia provided by the HisH subunit. This chain is Imidazole glycerol phosphate synthase subunit HisF, found in Pseudoalteromonas translucida (strain TAC 125).